Consider the following 460-residue polypeptide: Flavonol 3-O-glucosyltransferase (460 aa).

The active-site Proton acceptor is the His23. Residues His23 and Gln88 each contribute to the an anthocyanidin site. The active-site Charge relay is the Asp123. Thr145 lines the UDP-alpha-D-glucose pocket. Residue His154 participates in an anthocyanidin binding. Ala339, Gln341, His356, Trp359, Asn360, Ser361, and Glu364 together coordinate UDP-alpha-D-glucose. Gly379 is a binding site for an anthocyanidin. Residues Asp380 and Gln381 each contribute to the UDP-alpha-D-glucose site.

Belongs to the UDP-glycosyltransferase family.

It catalyses the reaction a flavonol + UDP-alpha-D-glucose = a flavonol 3-O-beta-D-glucoside + UDP + H(+). It carries out the reaction quercetin + UDP-alpha-D-glucose = quercetin 3-O-beta-D-glucoside + UDP + H(+). Its pathway is flavonoid metabolism. Flavonol 3-O-glucosyltransferase that catalyzes the transfer of glucose from UDP-glucose to the 3-OH position of quercetin and kaempferol. Possesses high quercetin 3-O-glucosyltransferase activity in vitro. Catalyzes the glycosylation of anthocyanins from UDP-glucose. Also active in vitro on benzoates and benzoate derivatives. The chain is Flavonol 3-O-glucosyltransferase from Arabidopsis thaliana (Mouse-ear cress).